The sequence spans 1208 residues: MEGGESAESTHNTKVSDSAYSNSCSNSQSQRSGSSKSRLSGSHSSGSSGYGGKPSTQASSSDMIIKRNKDKSRKKKKNKGAGQGAGQAGQSLISASTSLEGGAEEKPRPSGSGCGVEQQSCRELLQDQQHGEDHSEPKATEQLQQEEGDRSGSESEAERVENAAKSEAAQSFPIPSPLSVTIVPPSMGGCAGVGHAASLDSGLAKLDKTWEAGGPGKVEPVPGVPGTAAAGTGQRGERLKEESFCCVISMHDGIVLYTTPSITDVLGYPRDMWLGRSFIDFVHLKDRATFASQITTGIPIAESRGSVPKDTKSTFCVMLRRYRGLKSGGFGVIGRPVSYEPFRLGLTFREAPEEARPDNYMVSNGTNMLLVICATPIKSSYKIPDEILSQKSPKFAIRHTATGIISHVDSAAVSALGYLPQDLIGRSIMDFYHQEDLSVMKETYEMVMKKGQTAGASFCSKPYRFLIQNGCYVLLETEWTSFVNPWSRKLEFVVGHHRVFQGPKSCNVFEAAPTCKLKMSEEAQSRNTRIKEDIVKRLAETVSRPSDTVKQEVSRRCQALASFMETLMDEVSRADLKLELPHENELTVSERDSVMLGEISPHHDYYDSKSSTETPPSYNQLNYNENLLRFFNSKPVTAPAELDPPKTEPPEPRGTCVSGASGPMSPVHEGSGGSGSSGNFTTASNIHMSSVTNTSIAGTGGTGTGTGTGTGTGTGTGTGTGTGTGTGTGTGNGTNSGTGTGSASSNYRGGSVAIQPVTLTEALLNKHNDEMEKFMLKKHRESRGRSGEKSKKSATDTLKMLEYSGPGHGIKRGGSHSWEGEANKPKQQLTLGTDAIKGVVGGSGGVVGTGGGAGVAGGGGTGTGLAGTSDGRLTMSSGAGGVVGGPGGAAAAAGVISSVGSSMPGPSSYPTCTQNINLWPPFSVGITPPVHSTHTAMAQSSFSSAGLFPTFYYIPASLTPTSPTRSPRMHKHPHKGGPEMPTTSQQAAAAAAQAAQAMPLQYMAGVMYPHPSLFYTHPAAAAATAMMYQPMPFTGMTNALQIPERPLGSQSAYNKSMYTTTPPSMAKKVPGAFHSVTTPSQVQRSSSQSASVNAEPGCSASVSDPCKKEAPGSSPIPSVMGDYNSELPCSSSNPANNKKYTDSNGNSDDMDGSSFSSFYSSFIKTTDGSESPPDIEKDPKHRKLKSMSPSDSKIMEHPEEDQTQHGDG.

Disordered regions lie at residues methionine 1–serine 171 and glycine 214–arginine 235. A compositionally biased stretch (low complexity) spans serine 16 to serine 47. The Nuclear localization signal motif lies at lysine 66–lysine 79. Basic residues predominate over residues lysine 66–lysine 79. Basic and acidic residues-rich tracts occupy residues glutamine 129 to alanine 139 and glutamate 147 to alanine 164. Over residues lysine 217–threonine 232 the composition is skewed to low complexity. 2 PAS domains span residues glutamate 242 to isoleucine 377 and phenylalanine 395 to glutamine 501. Disordered stretches follow at residues valine 636–tyrosine 747, glutamate 802–glutamate 821, threonine 961–threonine 982, and valine 1076–glycine 1208. A compositionally biased stretch (polar residues) spans asparagine 679–alanine 697. Tandem repeats lie at residues glycine 698 to threonine 699, glycine 701 to threonine 702, glycine 703 to threonine 704, glycine 705 to threonine 706, glycine 707 to threonine 708, glycine 709 to threonine 710, glycine 711 to threonine 712, glycine 713 to threonine 714, glycine 715 to threonine 716, glycine 717 to threonine 718, glycine 719 to threonine 720, glycine 721 to threonine 722, glycine 723 to threonine 724, glycine 725 to threonine 726, glycine 727 to threonine 728, glycine 729 to threonine 730, and glycine 731 to asparagine 732. Residues glycine 698–threonine 740 show a composition bias toward gly residues. The interval glycine 698–serine 742 is 21 X 2 AA approximate tandem repeats of G-[TN]. The stretch at threonine 734–asparagine 735 is one 18; approximate repeat. Tandem repeats lie at residues glycine 737–threonine 738 and glycine 739–threonine 740. One copy of the 21; approximate repeat lies at glycine 741 to serine 742. The segment covering valine 1076–valine 1092 has biased composition (low complexity). The segment covering leucine 1127–lysine 1138 has biased composition (polar residues). The span at aspartate 1142–serine 1161 shows a compositional bias: low complexity. Residues lysine 1193 to glycine 1208 show a composition bias toward basic and acidic residues.

As to quaternary structure, forms a heterodimer with timeless (TIM); the complex then translocates into the nucleus. In terms of processing, phosphorylated with a circadian rhythmicity, probably by the double-time protein (dbt). Phosphorylation could be implicated in the stability of per monomer and in the formation of heterodimer per-tim.

Its subcellular location is the nucleus. The protein resides in the cytoplasm. It is found in the perinuclear region. In terms of biological role, essential for biological clock functions. Determines the period length of circadian and ultradian rhythms; an increase in PER dosage leads to shortened circadian rhythms and a decrease leads to lengthened circadian rhythms. Essential for the circadian rhythmicity of locomotor activity, eclosion behavior, and for the rhythmic component of the male courtship song that originates in the thoracic nervous system. The biological cycle depends on the rhythmic formation and nuclear localization of the TIM-PER complex. Light induces the degradation of TIM, which promotes elimination of PER. Nuclear activity of the heterodimer coordinatively regulates PER and TIM transcription through a negative feedback loop. Behaves as a negative element in circadian transcriptional loop. Does not appear to bind DNA, suggesting indirect transcriptional inhibition. In Drosophila yakuba (Fruit fly), this protein is Period circadian protein (per).